The chain runs to 297 residues: Cyclin-dependent kinase 1 (297 aa).

Met1 carries the N-acetylmethionine modification. Tyr4 carries the post-translational modification Phosphotyrosine; by PKR. Positions 4–287 (YIKIEKIGEG…GKMALKHPYF (284 aa)) constitute a Protein kinase domain. N6-acetyllysine; alternate is present on residues Lys6 and Lys9. Glycyl lysine isopeptide (Lys-Gly) (interchain with G-Cter in SUMO2); alternate cross-links involve residues Lys6 and Lys9. 10–18 (IGEGTYGVV) serves as a coordination point for ATP. Phosphothreonine; by PKMYT1 is present on Thr14. Tyr15 carries the post-translational modification Phosphotyrosine; by PKMYT1, WEE1, WEE2 and PKC/PRKCD. At Tyr15 the chain carries Phosphotyrosine; by WEE1 and WEE2. Residue Tyr19 is modified to Phosphotyrosine. Residue Lys20 forms a Glycyl lysine isopeptide (Lys-Gly) (interchain with G-Cter in SUMO2) linkage. Position 33 (Lys33) interacts with ATP. Ser39 is modified (phosphoserine). Tyr77 is modified (phosphotyrosine). Catalysis depends on Asp128, which acts as the Proton acceptor. Residue Lys139 forms a Glycyl lysine isopeptide (Lys-Gly) (interchain with G-Cter in SUMO2) linkage. Thr141 carries the post-translational modification Phosphothreonine. Phosphothreonine; by CAK is present on Thr161. Ser178 is subject to Phosphoserine. Residue Thr222 is modified to Phosphothreonine. Lys245 is subject to N6-succinyllysine. Ser248 is subject to Phosphoserine.

This sequence belongs to the protein kinase superfamily. CMGC Ser/Thr protein kinase family. CDC2/CDKX subfamily. As to quaternary structure, forms a stable but non-covalent complex with a regulatory subunit and with a cyclin. Interacts with cyclins-B (CCNB1, CCNB2 and CCNB3) to form a serine/threonine kinase holoenzyme complex also known as maturation promoting factor (MPF). The cyclin subunit imparts substrate specificity to the complex. Can also form CDK1-cylin-D and CDK1-cyclin-E complexes that phosphorylate RB1 in vitro. Binds to RB1 and other transcription factors such as FOXO1 and RUNX2. Promotes G2-M transition when in complex with a cyclin-B. Interacts with DLGAP5. Binds to the CDK inhibitors CDKN1A/p21 and CDKN1B/p27. Isoform 2 is unable to complex with cyclin-B1 and also fails to bind to CDKN1A/p21. Interacts with catalytically active CCNB1 and RALBP1 during mitosis to form an endocytotic complex during interphase. Associates with cyclins-A and B1 during S-phase in regenerating hepatocytes. Interacts with FANCC. Interacts with CEP63; this interaction recruits CDK1 to centrosomes. Interacts with CENPA. Interacts with NR1D1. Interacts with proteasome subunit PSMA8; to participate in meiosis progression during spermatogenesis. Post-translationally, phosphorylation at Thr-161 by CAK/CDK7 activates kinase activity. Phosphorylation at Thr-14 and Tyr-15 by PKMYT1 prevents nuclear translocation. Phosphorylation at Tyr-15 by WEE1 and WEE2 inhibits the protein kinase activity and acts as a negative regulator of entry into mitosis (G2 to M transition). Phosphorylation by PKMYT1 and WEE1 takes place during mitosis to keep CDK1-cyclin-B complexes inactive until the end of G2. By the end of G2, PKMYT1 and WEE1 are inactivated, but CDC25A and CDC25B are activated. Dephosphorylation by active CDC25A and CDC25B at Thr-14 and Tyr-15, leads to CDK1 activation at the G2-M transition. Phosphorylation at Tyr-15 by WEE2 during oogenesis is required to maintain meiotic arrest in oocytes during the germinal vesicle (GV) stage, a long period of quiescence at dictyate prophase I, leading to prevent meiotic reentry. Phosphorylation by WEE2 is also required for metaphase II exit during egg activation to ensure exit from meiosis in oocytes and promote pronuclear formation. Phosphorylated at Tyr-4 by PKR/EIF2AK2 upon genotoxic stress. This phosphorylation triggers CDK1 polyubiquitination and subsequent proteolysis, thus leading to G2 arrest. In response to UV irradiation, phosphorylation at Tyr-15 by PRKCD activates the G2/M DNA damage checkpoint. Polyubiquitinated upon genotoxic stress.

The protein localises to the nucleus. Its subcellular location is the cytoplasm. It localises to the mitochondrion. It is found in the cytoskeleton. The protein resides in the microtubule organizing center. The protein localises to the centrosome. Its subcellular location is the spindle. The catalysed reaction is L-seryl-[protein] + ATP = O-phospho-L-seryl-[protein] + ADP + H(+). It catalyses the reaction L-threonyl-[protein] + ATP = O-phospho-L-threonyl-[protein] + ADP + H(+). The enzyme catalyses [DNA-directed RNA polymerase] + ATP = phospho-[DNA-directed RNA polymerase] + ADP + H(+). Its activity is regulated as follows. Phosphorylation at Thr-14 or Tyr-15 inactivates the enzyme, while phosphorylation at Thr-161 activates it. Activated through a multistep process; binding to cyclin-B is required for relocation of cyclin-kinase complexes to the nucleus, activated by CAK/CDK7-mediated phosphorylation on Thr-161, and CDC25-mediated dephosphorylation of inhibitory phosphorylation on Thr-14 and Tyr-15. Activity is restricted during S-phase in an ATR-dependent manner to prevent premature entry into G2. Repressed by the CDK inhibitors CDKN1A/p21 and CDKN1B/p27 during the G1 phase and by CDKN1A/p21 at the G1-S checkpoint upon DNA damage. Transient activation by rapid and transient dephosphorylation at Tyr-15 triggered by TGFB1. Functionally, plays a key role in the control of the eukaryotic cell cycle by modulating the centrosome cycle as well as mitotic onset; promotes G2-M transition via association with multiple interphase cyclins. Phosphorylates PARVA/actopaxin, APC, AMPH, APC, BARD1, Bcl-xL/BCL2L1, BRCA2, CALD1, CASP8, CDC7, CDC20, CDC25A, CDC25C, CC2D1A, CENPA, CSNK2 proteins/CKII, FZR1/CDH1, CDK7, CEBPB, CHAMP1, DMD/dystrophin, EEF1 proteins/EF-1, EZH2, KIF11/EG5, EGFR, FANCG, FOS, GFAP, GOLGA2/GM130, GRASP1, UBE2A/hHR6A, HIST1H1 proteins/histone H1, HMGA1, HIVEP3/KRC, KAT5, LMNA, LMNB, LBR, MKI67, LATS1, MAP1B, MAP4, MARCKS, MCM2, MCM4, MKLP1, MLST8, MYB, NEFH, NFIC, NPC/nuclear pore complex, PITPNM1/NIR2, NPM1, NCL, NUCKS1, NPM1/numatrin, ORC1, PRKAR2A, EEF1E1/p18, EIF3F/p47, p53/TP53, NONO/p54NRB, PAPOLA, PLEC/plectin, RB1, TPPP, UL40/R2, RAB4A, RAP1GAP, RBBP8/CtIP, RCC1, RPS6KB1/S6K1, KHDRBS1/SAM68, ESPL1, SKI, BIRC5/survivin, STIP1, TEX14, beta-tubulins, MAPT/TAU, NEDD1, VIM/vimentin, TK1, FOXO1, RUNX1/AML1, SAMHD1, SIRT2, CGAS, ZAR1 and RUNX2. CDK1/CDC2-cyclin-B controls pronuclear union in interphase fertilized eggs. Essential for early stages of embryonic development. During G2 and early mitosis, CDC25A/B/C-mediated dephosphorylation activates CDK1/cyclin complexes which phosphorylate several substrates that trigger at least centrosome separation, Golgi dynamics, nuclear envelope breakdown and chromosome condensation. Once chromosomes are condensed and aligned at the metaphase plate, CDK1 activity is switched off by WEE1- and PKMYT1-mediated phosphorylation to allow sister chromatid separation, chromosome decondensation, reformation of the nuclear envelope and cytokinesis. Phosphorylates KRT5 during prometaphase and metaphase. Inactivated by PKR/EIF2AK2- and WEE1-mediated phosphorylation upon DNA damage to stop cell cycle and genome replication at the G2 checkpoint thus facilitating DNA repair. Reactivated after successful DNA repair through WIP1-dependent signaling leading to CDC25A/B/C-mediated dephosphorylation and restoring cell cycle progression. Catalyzes lamin (LMNA, LMNB1 and LMNB2) phosphorylation at the onset of mitosis, promoting nuclear envelope breakdown. In proliferating cells, CDK1-mediated FOXO1 phosphorylation at the G2-M phase represses FOXO1 interaction with 14-3-3 proteins and thereby promotes FOXO1 nuclear accumulation and transcription factor activity, leading to cell death of postmitotic neurons. The phosphorylation of beta-tubulins regulates microtubule dynamics during mitosis. NEDD1 phosphorylation promotes PLK1-mediated NEDD1 phosphorylation and subsequent targeting of the gamma-tubulin ring complex (gTuRC) to the centrosome, an important step for spindle formation. In addition, CC2D1A phosphorylation regulates CC2D1A spindle pole localization and association with SCC1/RAD21 and centriole cohesion during mitosis. The phosphorylation of Bcl-xL/BCL2L1 after prolongated G2 arrest upon DNA damage triggers apoptosis. In contrast, CASP8 phosphorylation during mitosis prevents its activation by proteolysis and subsequent apoptosis. This phosphorylation occurs in cancer cell lines, as well as in primary breast tissues and lymphocytes. EZH2 phosphorylation promotes H3K27me3 maintenance and epigenetic gene silencing. CALD1 phosphorylation promotes Schwann cell migration during peripheral nerve regeneration. CDK1-cyclin-B complex phosphorylates NCKAP5L and mediates its dissociation from centrosomes during mitosis. Regulates the amplitude of the cyclic expression of the core clock gene BMAL1 by phosphorylating its transcriptional repressor NR1D1, and this phosphorylation is necessary for SCF(FBXW7)-mediated ubiquitination and proteasomal degradation of NR1D1. Phosphorylates EML3 at 'Thr-881' which is essential for its interaction with HAUS augmin-like complex and TUBG1. Phosphorylates CGAS during mitosis, leading to its inhibition, thereby preventing CGAS activation by self DNA during mitosis. Phosphorylates SKA3 during mitosis which promotes SKA3 binding to the NDC80 complex and anchoring of the SKA complex to kinetochores, to enable stable attachment of mitotic spindle microtubules to kinetochores. This is Cyclin-dependent kinase 1 (Cdk1) from Rattus norvegicus (Rat).